Consider the following 129-residue polypeptide: MMRVSEEEAKRIAERLNYRWPDRTVVAVAQEYKSGKVLMVASMNKEAVIKTLTTGIVHYWSKSRKELWVKGATSGHVQVLEKFYYDCDADSVLLVVRQASLIACHEGYRSCFHYKVEEGGVKVEEPSYE.

Mg(2+) is bound at residue Asp-86. Cys-87 contacts Zn(2+). Mg(2+) contacts are provided by Asp-88 and Asp-90. Zn(2+) is bound by residues Cys-104 and Cys-111.

The protein belongs to the PRA-CH family. In terms of assembly, homodimer. The cofactor is Mg(2+). It depends on Zn(2+) as a cofactor.

Its subcellular location is the cytoplasm. It catalyses the reaction 1-(5-phospho-beta-D-ribosyl)-5'-AMP + H2O = 1-(5-phospho-beta-D-ribosyl)-5-[(5-phospho-beta-D-ribosylamino)methylideneamino]imidazole-4-carboxamide. Its pathway is amino-acid biosynthesis; L-histidine biosynthesis; L-histidine from 5-phospho-alpha-D-ribose 1-diphosphate: step 3/9. Functionally, catalyzes the hydrolysis of the adenine ring of phosphoribosyl-AMP. The chain is Phosphoribosyl-AMP cyclohydrolase from Ignicoccus hospitalis (strain KIN4/I / DSM 18386 / JCM 14125).